The primary structure comprises 196 residues: Chorion protein S19 (196 aa).

Residues 1-16 form the signal peptide; sequence MNTFATLAIFISACLA.

The protein belongs to the chorion protein S19 family.

It is found in the secreted. In terms of biological role, chorion membrane (egg shell) protein; plays a role in protecting the egg from the environment. The polypeptide is Chorion protein S19 (Cp19) (Drosophila grimshawi (Hawaiian fruit fly)).